Reading from the N-terminus, the 955-residue chain is Isoleucine--tRNA ligase (955 aa).

A 'HIGH' region motif is present at residues 58–68 (IYANGDIHIGH). Glutamate 552 contacts L-isoleucyl-5'-AMP. Positions 593–597 (KMSKS) match the 'KMSKS' region motif. Residue lysine 596 coordinates ATP. Residues cysteine 918, cysteine 921, cysteine 938, and cysteine 941 each coordinate Zn(2+).

Belongs to the class-I aminoacyl-tRNA synthetase family. IleS type 1 subfamily. In terms of assembly, monomer. Zn(2+) serves as cofactor.

The protein localises to the cytoplasm. The catalysed reaction is tRNA(Ile) + L-isoleucine + ATP = L-isoleucyl-tRNA(Ile) + AMP + diphosphate. Catalyzes the attachment of isoleucine to tRNA(Ile). As IleRS can inadvertently accommodate and process structurally similar amino acids such as valine, to avoid such errors it has two additional distinct tRNA(Ile)-dependent editing activities. One activity is designated as 'pretransfer' editing and involves the hydrolysis of activated Val-AMP. The other activity is designated 'posttransfer' editing and involves deacylation of mischarged Val-tRNA(Ile). The polypeptide is Isoleucine--tRNA ligase (Vesicomyosocius okutanii subsp. Calyptogena okutanii (strain HA)).